Consider the following 326-residue polypeptide: Lipoyl synthase (326 aa).

[4Fe-4S] cluster contacts are provided by C68, C73, C79, C94, C98, C101, and S308. The Radical SAM core domain maps to 80 to 297 (FNHGTATFMI…KDVAMGLGFS (218 aa)).

It belongs to the radical SAM superfamily. Lipoyl synthase family. [4Fe-4S] cluster serves as cofactor.

Its subcellular location is the cytoplasm. It catalyses the reaction [[Fe-S] cluster scaffold protein carrying a second [4Fe-4S](2+) cluster] + N(6)-octanoyl-L-lysyl-[protein] + 2 oxidized [2Fe-2S]-[ferredoxin] + 2 S-adenosyl-L-methionine + 4 H(+) = [[Fe-S] cluster scaffold protein] + N(6)-[(R)-dihydrolipoyl]-L-lysyl-[protein] + 4 Fe(3+) + 2 hydrogen sulfide + 2 5'-deoxyadenosine + 2 L-methionine + 2 reduced [2Fe-2S]-[ferredoxin]. Its pathway is protein modification; protein lipoylation via endogenous pathway; protein N(6)-(lipoyl)lysine from octanoyl-[acyl-carrier-protein]: step 2/2. Its function is as follows. Catalyzes the radical-mediated insertion of two sulfur atoms into the C-6 and C-8 positions of the octanoyl moiety bound to the lipoyl domains of lipoate-dependent enzymes, thereby converting the octanoylated domains into lipoylated derivatives. In Aeromonas salmonicida (strain A449), this protein is Lipoyl synthase.